A 182-amino-acid chain; its full sequence is Rhodanese-like domain-containing protein 15, chloroplastic (182 aa).

Residues 1-65 (METTAFNTTS…TTSRGNVAAE (65 aa)) constitute a chloroplast transit peptide. One can recognise a Rhodanese domain in the interval 82–182 (AQAGYRYLDV…WTENELPVEE (101 aa)). Residue C142 is the Cysteine persulfide intermediate of the active site.

The protein localises to the plastid. The protein resides in the chloroplast. It localises to the thylakoid. This chain is Rhodanese-like domain-containing protein 15, chloroplastic (STR15), found in Arabidopsis thaliana (Mouse-ear cress).